The sequence spans 405 residues: Formin-like protein 15a (405 aa).

The tract at residues 1–31 is disordered; sequence MSLVEISGSDAMAAPMPGRVPPPPPRPPPMP. The segment covering 18-31 has biased composition (pro residues); that stretch reads GRVPPPPPRPPPMP. An FH2 domain is found at 52–405; it reads FPRPAKKRAS…VCWFFVRLMI (354 aa).

Belongs to the formin-like family. Class-II subfamily.

This is Formin-like protein 15a (FH15A) from Arabidopsis thaliana (Mouse-ear cress).